Consider the following 389-residue polypeptide: Chalcone synthase (389 aa).

The active site involves cysteine 164.

This sequence belongs to the thiolase-like superfamily. Chalcone/stilbene synthases family.

The catalysed reaction is (E)-4-coumaroyl-CoA + 3 malonyl-CoA + 3 H(+) = 2',4,4',6'-tetrahydroxychalcone + 3 CO2 + 4 CoA. Its pathway is secondary metabolite biosynthesis; flavonoid biosynthesis. Functionally, the primary product of this enzyme is 4,2',4',6'-tetrahydroxychalcone (also termed naringenin-chalcone or chalcone) which can under specific conditions spontaneously isomerize into naringenin. The polypeptide is Chalcone synthase (CHS) (Catharanthus roseus (Madagascar periwinkle)).